The primary structure comprises 764 residues: 5-methyltetrahydropteroyltriglutamate--homocysteine methyltransferase (764 aa).

5-methyltetrahydropteroyltri-L-glutamate is bound by residues 16-19 (RELK) and K115. Residues 435–437 (IGS) and E488 contribute to the L-homocysteine site. Residues 435–437 (IGS) and E488 each bind L-methionine. 5-methyltetrahydropteroyltri-L-glutamate contacts are provided by residues 519-520 (RC) and W565. Residue D603 participates in L-homocysteine binding. D603 is an L-methionine binding site. 5-methyltetrahydropteroyltri-L-glutamate is bound at residue E609. The Zn(2+) site is built by H645, C647, and E669. H698 acts as the Proton donor in catalysis. A Zn(2+)-binding site is contributed by C730.

This sequence belongs to the vitamin-B12 independent methionine synthase family. Zn(2+) serves as cofactor.

It catalyses the reaction 5-methyltetrahydropteroyltri-L-glutamate + L-homocysteine = tetrahydropteroyltri-L-glutamate + L-methionine. The protein operates within amino-acid biosynthesis; L-methionine biosynthesis via de novo pathway; L-methionine from L-homocysteine (MetE route): step 1/1. Catalyzes the transfer of a methyl group from 5-methyltetrahydrofolate to homocysteine resulting in methionine formation. This chain is 5-methyltetrahydropteroyltriglutamate--homocysteine methyltransferase, found in Burkholderia pseudomallei (strain 668).